A 294-amino-acid polypeptide reads, in one-letter code: 4-hydroxy-tetrahydrodipicolinate synthase (294 aa).

Residue threonine 47 participates in pyruvate binding. Tyrosine 135 functions as the Proton donor/acceptor in the catalytic mechanism. Lysine 163 (schiff-base intermediate with substrate) is an active-site residue. Isoleucine 206 contributes to the pyruvate binding site.

It belongs to the DapA family. As to quaternary structure, homodimer.

It is found in the cytoplasm. It catalyses the reaction L-aspartate 4-semialdehyde + pyruvate = (2S,4S)-4-hydroxy-2,3,4,5-tetrahydrodipicolinate + H2O + H(+). It participates in amino-acid biosynthesis; L-lysine biosynthesis via DAP pathway; (S)-tetrahydrodipicolinate from L-aspartate: step 3/4. In terms of biological role, catalyzes the condensation of (S)-aspartate-beta-semialdehyde [(S)-ASA] and pyruvate to 4-hydroxy-tetrahydrodipicolinate (HTPA). The protein is 4-hydroxy-tetrahydrodipicolinate synthase of Staphylococcus carnosus (strain TM300).